Consider the following 535-residue polypeptide: Beta-glucosidase 20 (535 aa).

The N-terminal stretch at 1 to 24 (MGRFHKFPLLGLVLFLGLTGSLIA) is a signal peptide. The a beta-D-glucoside site is built by Gln56 and His159. A glycan (N-linked (GlcNAc...) asparagine) is linked at Asn187. 204–205 (NE) contributes to the a beta-D-glucoside binding site. Glu205 functions as the Proton donor in the catalytic mechanism. A disulfide bridge links Cys224 with Cys235. A beta-D-glucoside contacts are provided by Tyr351 and Glu424. The active-site Nucleophile is the Glu424. Residue Asn468 is glycosylated (N-linked (GlcNAc...) asparagine). A beta-D-glucoside contacts are provided by residues Trp475, 482–483 (EW), and Phe491. Asn501 carries an N-linked (GlcNAc...) asparagine glycan. The Prevents secretion from ER motif lies at 532–535 (HDEL).

Belongs to the glycosyl hydrolase 1 family.

It localises to the endoplasmic reticulum lumen. It catalyses the reaction Hydrolysis of terminal, non-reducing beta-D-glucosyl residues with release of beta-D-glucose.. The polypeptide is Beta-glucosidase 20 (Arabidopsis thaliana (Mouse-ear cress)).